Reading from the N-terminus, the 157-residue chain is Nuclear cap-binding protein subunit 2 (157 aa).

Residues Tyr-17, Tyr-40, 109–113 (RADWD), 120–124 (RQYGR), and 130–131 (QV) contribute to the mRNA site. The RRM domain occupies 37–115 (CTLYVGNLSY…RVIRADWDAG (79 aa)).

It belongs to the RRM NCBP2 family. As to quaternary structure, component of the nuclear cap-binding complex (CBC), a heterodimer composed of ncbp-1 and ncbp-2 that interacts with m7GpppG-capped RNA.

The protein localises to the nucleus. In terms of biological role, component of the cap-binding complex (CBC), which binds co-transcriptionally to the 5' cap of pre-mRNAs and is involved in various processes such as pre-mRNA splicing and RNA-mediated gene silencing (RNAi). The CBC complex is involved in miRNA-mediated RNA interference and is required for primary microRNAs (miRNAs) processing. In the CBC complex, ncbp-2 recognizes and binds capped RNAs (m7GpppG-capped RNA) but requires ncbp-1 to stabilize the movement of its N-terminal loop and lock the CBC into a high affinity cap-binding state with the cap structure. This Caenorhabditis briggsae protein is Nuclear cap-binding protein subunit 2 (ncbp-2).